The primary structure comprises 224 residues: uncharacterized protein (224 aa).

The tract at residues 128–224 (VPSVQLHQIP…TNKRKKRLQF (97 aa)) is disordered. Residues 129 to 138 (PSVQLHQIPT) are compositionally biased toward polar residues. The segment covering 139 to 156 (RSRRSSKPRKPRKKRKER) has biased composition (basic residues). Over residues 167-182 (LLREMDRLMTKQRDAL) the composition is skewed to basic and acidic residues. Over residues 185-195 (SESSSYFSSDS) the composition is skewed to low complexity.

This is an uncharacterized protein from Torque teno sus virus 1 (isolate Sd-TTV31).